The chain runs to 441 residues: 5-hydroxytryptamine receptor 3B (441 aa).

The N-terminal stretch at 1 to 21 (MLSSVMAPLWACILVAAGILA) is a signal peptide. Over 22-238 (TDTHHPQDSA…IQFNVVMRRH (217 aa)) the chain is Extracellular. N-linked (GlcNAc...) asparagine glycosylation is found at asparagine 52, asparagine 96, asparagine 138, asparagine 168, and asparagine 203. A disulfide bridge links cysteine 155 with cysteine 169. Residues 239 to 259 (PLVYVVSLLIPSIFLMLVDLG) form a helical membrane-spanning segment. Residues 260-268 (SFYLPPNCR) lie on the Cytoplasmic side of the membrane. The helical transmembrane segment at 269-286 (ARIVFKTSVLVGYTVFRV) threads the bilayer. The N-linked (GlcNAc...) asparagine glycan is linked to asparagine 287. The Extracellular portion of the chain corresponds to 287 to 303 (NMSNQVPRSVGSTPLIG). A helical membrane pass occupies residues 304–324 (HFFTICMAFLVLSLAKSIVLV). Topologically, residues 325–414 (KFLHDEQRGG…WLVLLSRFDR (90 aa)) are cytoplasmic. Residues 381–413 (VWSQLQSISNYLQTQDQTDQQEAEWLVLLSRFD) are HA-stretch; determines single-channel conductance in 5-HT3 receptors. A helical membrane pass occupies residues 415-435 (LLFQSYLFMLGIYTITLCSLW). The Extracellular segment spans residues 436 to 441 (ALWGGV).

This sequence belongs to the ligand-gated ion channel (TC 1.A.9) family. 5-hydroxytryptamine receptor (TC 1.A.9.2) subfamily. HTR3B sub-subfamily. As to quaternary structure, forms homopentameric as well as heteropentameric serotonin-activated cation-selective channel complexes with HTR3A. The homomeric complex is not functional. Heteropentameric complexes display properties which resemble that of neuronal serotonin-activated channels in vivo. Post-translationally, N-glycosylation required for membrane localization. In terms of tissue distribution, expressed in the brain cortex, in the caudate nucleus, the hippocampus, the thalamus and the amygdala. Detected in the kidney and testis as well as in monocytes of the spleen, small and large intestine, uterus, prostate, ovary and placenta.

The protein resides in the postsynaptic cell membrane. Its subcellular location is the cell membrane. The enzyme catalyses Na(+)(in) = Na(+)(out). It catalyses the reaction K(+)(in) = K(+)(out). The catalysed reaction is Ca(2+)(in) = Ca(2+)(out). Its function is as follows. Forms serotonin (5-hydroxytryptamine/5-HT3)-activated cation-selective channel complexes, which when activated cause fast, depolarizing responses in neurons. The chain is 5-hydroxytryptamine receptor 3B from Homo sapiens (Human).